The chain runs to 308 residues: Thymidylate synthase (308 aa).

Residues Arg-26 and 170 to 171 each bind dUMP; that span reads RR. Residue Cys-190 is the Nucleophile of the active site. Residues 210 to 213, Asn-221, and 251 to 253 each bind dUMP; these read RSCD and HVY. Residue Asp-213 coordinates (6R)-5,10-methylene-5,6,7,8-tetrahydrofolate. Ala-307 lines the (6R)-5,10-methylene-5,6,7,8-tetrahydrofolate pocket.

Belongs to the thymidylate synthase family. Bacterial-type ThyA subfamily. In terms of assembly, homodimer.

It localises to the cytoplasm. It catalyses the reaction dUMP + (6R)-5,10-methylene-5,6,7,8-tetrahydrofolate = 7,8-dihydrofolate + dTMP. It participates in pyrimidine metabolism; dTTP biosynthesis. In terms of biological role, catalyzes the reductive methylation of 2'-deoxyuridine-5'-monophosphate (dUMP) to 2'-deoxythymidine-5'-monophosphate (dTMP) while utilizing 5,10-methylenetetrahydrofolate (mTHF) as the methyl donor and reductant in the reaction, yielding dihydrofolate (DHF) as a by-product. This enzymatic reaction provides an intracellular de novo source of dTMP, an essential precursor for DNA biosynthesis. The sequence is that of Thymidylate synthase from Rhizorhabdus wittichii (strain DSM 6014 / CCUG 31198 / JCM 15750 / NBRC 105917 / EY 4224 / RW1) (Sphingomonas wittichii).